The primary structure comprises 375 residues: Carbamoyl phosphate synthase small chain (375 aa).

The tract at residues 1–184 (MVSLYLENGL…LDYKPFDEKT (184 aa)) is CPSase. Residues S44, G240, and G242 each contribute to the L-glutamine site. The Glutamine amidotransferase type-1 domain maps to 188–375 (IIAVLDFGAK…KEFVELLKDF (188 aa)). Catalysis depends on C268, which acts as the Nucleophile. 4 residues coordinate L-glutamine: L269, Q272, N310, and Y313. Active-site residues include H351 and E353.

It belongs to the CarA family. As to quaternary structure, composed of two chains; the small (or glutamine) chain promotes the hydrolysis of glutamine to ammonia, which is used by the large (or ammonia) chain to synthesize carbamoyl phosphate. Tetramer of heterodimers (alpha,beta)4.

The enzyme catalyses hydrogencarbonate + L-glutamine + 2 ATP + H2O = carbamoyl phosphate + L-glutamate + 2 ADP + phosphate + 2 H(+). It carries out the reaction L-glutamine + H2O = L-glutamate + NH4(+). Its pathway is amino-acid biosynthesis; L-arginine biosynthesis; carbamoyl phosphate from bicarbonate: step 1/1. It participates in pyrimidine metabolism; UMP biosynthesis via de novo pathway; (S)-dihydroorotate from bicarbonate: step 1/3. In terms of biological role, small subunit of the glutamine-dependent carbamoyl phosphate synthetase (CPSase). CPSase catalyzes the formation of carbamoyl phosphate from the ammonia moiety of glutamine, carbonate, and phosphate donated by ATP, constituting the first step of 2 biosynthetic pathways, one leading to arginine and/or urea and the other to pyrimidine nucleotides. The small subunit (glutamine amidotransferase) binds and cleaves glutamine to supply the large subunit with the substrate ammonia. This chain is Carbamoyl phosphate synthase small chain, found in Helicobacter pylori (strain ATCC 700392 / 26695) (Campylobacter pylori).